We begin with the raw amino-acid sequence, 329 residues long: Serine/threonine-protein phosphatase PP2A catalytic subunit (329 aa).

Positions 1-25 (MDNNMEIDAARSPEPHHLSPTTDPG) are disordered. Residues 8-17 (DAARSPEPHH) show a composition bias toward basic and acidic residues. Positions 77, 79, 105, and 137 each coordinate Mn(2+). His-138 functions as the Proton donor in the catalytic mechanism. Residues His-187 and His-261 each contribute to the Mn(2+) site. Residue Leu-329 is modified to Leucine methyl ester.

It belongs to the PPP phosphatase family. PP-2A subfamily. The cofactor is Mn(2+).

The catalysed reaction is O-phospho-L-seryl-[protein] + H2O = L-seryl-[protein] + phosphate. It carries out the reaction O-phospho-L-threonyl-[protein] + H2O = L-threonyl-[protein] + phosphate. Involved in hyphal morphogenesis. The protein is Serine/threonine-protein phosphatase PP2A catalytic subunit (pphA) of Emericella nidulans (strain FGSC A4 / ATCC 38163 / CBS 112.46 / NRRL 194 / M139) (Aspergillus nidulans).